A 433-amino-acid polypeptide reads, in one-letter code: Pyrimidine-nucleoside phosphorylase (433 aa).

Phosphate is bound at residue 81 to 83 (KHS). K(+) is bound by residues Gly88 and Thr90. Phosphate contacts are provided by residues Thr92, 108–110 (KMS), and Thr120. Substrate-binding residues include Arg168 and Lys187. Residues Leu243, Ala246, and Glu255 each coordinate K(+).

It belongs to the thymidine/pyrimidine-nucleoside phosphorylase family. In terms of assembly, homodimer. K(+) serves as cofactor.

The enzyme catalyses uridine + phosphate = alpha-D-ribose 1-phosphate + uracil. The catalysed reaction is thymidine + phosphate = 2-deoxy-alpha-D-ribose 1-phosphate + thymine. It catalyses the reaction 2'-deoxyuridine + phosphate = 2-deoxy-alpha-D-ribose 1-phosphate + uracil. Functionally, catalyzes phosphorolysis of the pyrimidine nucleosides uridine, thymidine and 2'-deoxyuridine with the formation of the corresponding pyrimidine base and ribose-1-phosphate. The protein is Pyrimidine-nucleoside phosphorylase (pdp) of Staphylococcus aureus (strain Mu50 / ATCC 700699).